A 336-amino-acid polypeptide reads, in one-letter code: UbiA prenyltransferase domain-containing protein 1 (336 aa).

Positions 1 to 22 are disordered; that stretch reads MQEMKPAALSGSNGLNGASGSS. Over residues 7 to 22 the composition is skewed to low complexity; the sequence is AALSGSNGLNGASGSS. Transmembrane regions (helical) follow at residues 79–99, 129–149, 158–178, 180–200, 201–221, 254–274, and 315–335; these read LLLLLVCAVAVLLVHGAGNLV, VVMFGAVLYSAGCLCATLLYF, LALIYFGGLSSSFLYTGGIGL, YVALGDVVILITFGPLAVMFA, HAVQVGYLSVLPLVYAVPLAL, LSYVIYNLLLFVPYLLFCILA, and LLMGLFYVFGIILAPQGSLPL.

Belongs to the UbiA prenyltransferase family.

The protein localises to the endoplasmic reticulum membrane. Its subcellular location is the golgi apparatus membrane. It is found in the mitochondrion membrane. The catalysed reaction is menadiol + (2E,6E,10E)-geranylgeranyl diphosphate = menaquinol-4 + diphosphate. It carries out the reaction all-trans-decaprenyl diphosphate + 4-hydroxybenzoate = 4-hydroxy-3-(all-trans-decaprenyl)benzoate + diphosphate. Its pathway is quinol/quinone metabolism; menaquinone biosynthesis. It participates in cofactor biosynthesis; ubiquinone biosynthesis. Its function is as follows. Prenyltransferase that mediates the formation of menaquinone-4 (MK-4) and coenzyme Q10. MK-4 is a vitamin K2 isoform required for endothelial cell development. Mediates the conversion of phylloquinone (PK) into MK-4, probably by cleaving the side chain of phylloquinone (PK) to release 2-methyl-1,4-naphthoquinone (menadione; K3) and then prenylating it with geranylgeranyl pyrophosphate (GGPP) to form MK-4. Also plays a role in cardiovascular development independently of MK-4 biosynthesis, by acting as a coenzyme Q10 biosynthetic enzyme: coenzyme Q10, also named ubiquinone, plays an important antioxidant role in the cardiovascular system. Mediates biosynthesis of coenzyme Q10 in the Golgi membrane, leading to protect cardiovascular tissues from nos3/eNOS-dependent oxidative stress. This Danio rerio (Zebrafish) protein is UbiA prenyltransferase domain-containing protein 1 (ubiad1).